The following is a 268-amino-acid chain: L-cystine-binding protein TcyA (268 aa).

The N-terminal stretch at 1–19 (MKKALLALFMVVSIAALAA) is a signal peptide. The N-palmitoyl cysteine moiety is linked to residue cysteine 20. Residue cysteine 20 is the site of S-diacylglycerol cysteine attachment.

This sequence belongs to the bacterial solute-binding protein 3 family. The complex is composed of two ATP-binding proteins (TcyC), two transmembrane proteins (TcyB) and a solute-binding protein (TcyA).

It localises to the cell membrane. Functionally, part of the ABC transporter complex TcyABC involved in L-cystine import. This Bacillus subtilis (strain 168) protein is L-cystine-binding protein TcyA (tcyA).